We begin with the raw amino-acid sequence, 761 residues long: Protein spire homolog 1 (761 aa).

Disordered stretches follow at residues M1–E23 and D160–S183. The 188-residue stretch at L36 to L223 folds into the KIND domain. Positions D160–A180 are enriched in acidic residues. Positions A218–E246 form a coiled coil. 2 consecutive WH2 domains span residues P295–V313 and L359–V376. Disordered stretches follow at residues P375–D406 and A419–A539. Residues S469–D480 show a composition bias toward low complexity. Positions P504–A520 are enriched in basic and acidic residues. A spir-box region spans residues L557–E577. 2 disordered regions span residues P630 to E694 and S728 to V761. Positions S636–L647 are enriched in low complexity. Over residues K682–L693 the composition is skewed to basic and acidic residues. A compositionally biased stretch (basic residues) spans S728–H739. Residues S740 to S749 are compositionally biased toward low complexity.

This sequence belongs to the spire family.

Its subcellular location is the cytoplasm. It localises to the cytoskeleton. The protein resides in the cytosol. It is found in the cleavage furrow. The protein localises to the perinuclear region. Its subcellular location is the cell membrane. It localises to the cytoplasmic vesicle membrane. Functionally, acts as an actin nucleation factor, remains associated with the slow-growing pointed end of the new filament. Involved in intracellular vesicle transport along actin fibers, providing a novel link between actin cytoskeleton dynamics and intracellular transport. Required for asymmetric spindle positioning and asymmetric cell division during meiosis. Required for normal formation of the cleavage furrow and for polar body extrusion during female germ cell meiosis. Also acts in the nucleus: together with FMN2, promotes assembly of nuclear actin filaments in response to DNA damage in order to facilitate movement of chromatin and repair factors after DNA damage. In addition, promotes innate immune signaling downstream of dsRNA sensing. Mechanistically, contributes to IRF3 phosphorylation and activation downstream of MAVS and upstream of TBK1. This is Protein spire homolog 1 from Danio rerio (Zebrafish).